The primary structure comprises 151 residues: Probable cGMP 3',5'-cyclic phosphodiesterase subunit delta (151 aa).

Belongs to the PDE6D/unc-119 family. In terms of assembly, interacts with Pde6.

Its subcellular location is the nucleus. The protein localises to the cytoplasm. This Culex quinquefasciatus (Southern house mosquito) protein is Probable cGMP 3',5'-cyclic phosphodiesterase subunit delta.